The sequence spans 236 residues: Venom metalloproteinase antarease-like TfasMP_A (236 aa).

The region spanning 4-232 (IVVEYYIVTD…KPAASCIFEQ (229 aa)) is the Peptidase M12B domain. Residue H161 participates in Zn(2+) binding. E162 is an active-site residue. 2 residues coordinate Zn(2+): H165 and H171.

Belongs to the venom metalloproteinase (M12B) family. Zn(2+) serves as cofactor. Contains several disulfide bonds. As to expression, expressed by the venom gland.

Its subcellular location is the secreted. Its activity is regulated as follows. Inhibited by EDTA. Acts as a metalloprotease. Penetrates intact tissue and specifically cleaves the vesicle-associated membrane protein 2 (VAMP2) (part of the SNARE complex) involved in pancreatic secretion, thus disrupting the normal vesicular traffic. This chain is Venom metalloproteinase antarease-like TfasMP_A, found in Tityus fasciolatus (Central Brazilian scorpion).